Here is a 505-residue protein sequence, read N- to C-terminus: Nicotinamide phosphoribosyltransferase (505 aa).

Arginine 196 is a binding site for diphosphate. Residue aspartate 219 coordinates beta-nicotinamide D-ribonucleotide. Histidine 246 and arginine 314 together coordinate diphosphate. Beta-nicotinamide D-ribonucleotide-binding positions include 314–316 (RPD), 369–370 (GD), and arginine 408.

This sequence belongs to the NAPRTase family.

It catalyses the reaction beta-nicotinamide D-ribonucleotide + diphosphate = 5-phospho-alpha-D-ribose 1-diphosphate + nicotinamide + H(+). It functions in the pathway cofactor biosynthesis; NAD(+) biosynthesis; nicotinamide D-ribonucleotide from 5-phospho-alpha-D-ribose 1-diphosphate and nicotinamide: step 1/1. 10-fold more active in the presence of saturating ATP. In terms of biological role, catalyzes the condensation of nicotinamide with 5-phosphoribosyl-1-pyrophosphate to yield nicotinamide mononucleotide, an intermediate in the biosynthesis of NAD. Functions in the nondeamidating salvage pathway for production of NAD from nicotinamide. Displays a strict preference for nicotinamide over nicotinate substrate. The sequence is that of Nicotinamide phosphoribosyltransferase from Acinetobacter baylyi (strain ATCC 33305 / BD413 / ADP1).